Consider the following 75-residue polypeptide: Protein Tlp homolog (75 aa).

A disordered region spans residues lysine 48–methionine 75.

It belongs to the Tlp family.

The polypeptide is Protein Tlp homolog (Clostridium botulinum (strain 657 / Type Ba4)).